The primary structure comprises 137 residues: Cell division protein SepF (137 aa).

The protein belongs to the SepF family. As to quaternary structure, homodimer. Interacts with FtsZ.

It localises to the cytoplasm. Cell division protein that is part of the divisome complex and is recruited early to the Z-ring. Probably stimulates Z-ring formation, perhaps through the cross-linking of FtsZ protofilaments. Its function overlaps with FtsA. This is Cell division protein SepF from Thermoanaerobacter pseudethanolicus (strain ATCC 33223 / 39E) (Clostridium thermohydrosulfuricum).